The following is a 458-amino-acid chain: Adenylosuccinate synthetase (458 aa).

GTP contacts are provided by residues 17-23 (GDEGKGK) and 45-47 (GHT). Residue D18 is the Proton acceptor of the active site. Residues D18 and G45 each coordinate Mg(2+). IMP contacts are provided by residues 18-21 (DEGK), 43-46 (NAGH), T137, R151, Q247, T262, and R330. H46 functions as the Proton donor in the catalytic mechanism. Position 326 to 332 (326 to 332 (VTTGRSR)) interacts with substrate. GTP is bound by residues R332, 358–360 (KLD), and 440–442 (STS).

This sequence belongs to the adenylosuccinate synthetase family. Homodimer. Mg(2+) serves as cofactor.

The protein localises to the cytoplasm. It catalyses the reaction IMP + L-aspartate + GTP = N(6)-(1,2-dicarboxyethyl)-AMP + GDP + phosphate + 2 H(+). It functions in the pathway purine metabolism; AMP biosynthesis via de novo pathway; AMP from IMP: step 1/2. In terms of biological role, plays an important role in the de novo pathway of purine nucleotide biosynthesis. Catalyzes the first committed step in the biosynthesis of AMP from IMP. The sequence is that of Adenylosuccinate synthetase from Verminephrobacter eiseniae (strain EF01-2).